A 397-amino-acid polypeptide reads, in one-letter code: Acetate kinase 2 (397 aa).

Position 10 (asparagine 10) interacts with Mg(2+). Residue lysine 17 coordinates ATP. A substrate-binding site is contributed by arginine 90. Aspartate 147 acts as the Proton donor/acceptor in catalysis. ATP-binding positions include 207 to 211 (HLGNG), 281 to 283 (DAR), and 329 to 333 (GIGEN). Position 385 (glutamate 385) interacts with Mg(2+).

This sequence belongs to the acetokinase family. Homodimer. Mg(2+) is required as a cofactor. Mn(2+) serves as cofactor.

The protein localises to the cytoplasm. The enzyme catalyses acetate + ATP = acetyl phosphate + ADP. The protein operates within metabolic intermediate biosynthesis; acetyl-CoA biosynthesis; acetyl-CoA from acetate: step 1/2. In terms of biological role, catalyzes the formation of acetyl phosphate from acetate and ATP. Can also catalyze the reverse reaction. This chain is Acetate kinase 2, found in Vibrio vulnificus (strain CMCP6).